Here is a 198-residue protein sequence, read N- to C-terminus: Prolactin (198 aa).

Disulfide bonds link C4–C11, C58–C173, and C190–C198.

It belongs to the somatotropin/prolactin family. Pituitary gland.

It is found in the secreted. The chain is Prolactin from Chelonia mydas (Green sea-turtle).